A 438-amino-acid chain; its full sequence is Coenzyme A disulfide reductase (438 aa).

8–33 contributes to the FAD binding site; the sequence is GAVAGGATCASQIRRLDKESDIIIFE. Substrate-binding residues include threonine 15, glutamine 19, arginine 22, serine 39, and asparagine 42. Cysteine 43 functions as the Nucleophile in the catalytic mechanism. Cysteine 43 acts as the Redox-active in catalysis. Lysine 71 lines the substrate pocket. An NADP(+)-binding site is contributed by 151–166; sequence VLVIGAGYVSLEVLEN. FAD is bound at residue 267-277; sequence TNVPNIYAIGD. Histidine 299 provides a ligand contact to substrate. Tyrosine 419 serves as a coordination point for FAD. A substrate-binding site is contributed by lysine 427.

The protein belongs to the class-III pyridine nucleotide-disulfide oxidoreductase family. In terms of assembly, homodimer. The cofactor is FAD.

The enzyme catalyses NADP(+) + 2 CoA = CoA-disulfide + NADPH + H(+). Catalyzes specifically the NADPH-dependent reduction of coenzyme A disulfide. This is Coenzyme A disulfide reductase from Staphylococcus aureus (strain JH1).